Consider the following 206-residue polypeptide: Large ribosomal subunit protein uL4 (206 aa).

The segment at 47-71 (TRAQKGRSEVAGSTRKQWRQKGTGR) is disordered.

This sequence belongs to the universal ribosomal protein uL4 family. In terms of assembly, part of the 50S ribosomal subunit.

Its function is as follows. One of the primary rRNA binding proteins, this protein initially binds near the 5'-end of the 23S rRNA. It is important during the early stages of 50S assembly. It makes multiple contacts with different domains of the 23S rRNA in the assembled 50S subunit and ribosome. In terms of biological role, forms part of the polypeptide exit tunnel. This is Large ribosomal subunit protein uL4 from Nitrosomonas eutropha (strain DSM 101675 / C91 / Nm57).